The chain runs to 249 residues: Triosephosphate isomerase (249 aa).

9–11 lines the substrate pocket; it reads NWK. The active-site Electrophile is H95. E167 acts as the Proton acceptor in catalysis. Residues G173, S213, and 234–235 contribute to the substrate site; that span reads GG.

The protein belongs to the triosephosphate isomerase family. Homodimer.

It is found in the cytoplasm. The enzyme catalyses D-glyceraldehyde 3-phosphate = dihydroxyacetone phosphate. It functions in the pathway carbohydrate biosynthesis; gluconeogenesis. It participates in carbohydrate degradation; glycolysis; D-glyceraldehyde 3-phosphate from glycerone phosphate: step 1/1. Involved in the gluconeogenesis. Catalyzes stereospecifically the conversion of dihydroxyacetone phosphate (DHAP) to D-glyceraldehyde-3-phosphate (G3P). The polypeptide is Triosephosphate isomerase (Dictyoglomus thermophilum (strain ATCC 35947 / DSM 3960 / H-6-12)).